The sequence spans 328 residues: GMP reductase (328 aa).

Residue Cys-176 is the Thioimidate intermediate of the active site. 205–228 (IIADGGIRTHGDIAKSVRFGATMV) lines the NADP(+) pocket.

The protein belongs to the IMPDH/GMPR family. GuaC type 2 subfamily.

It carries out the reaction IMP + NH4(+) + NADP(+) = GMP + NADPH + 2 H(+). Catalyzes the irreversible NADPH-dependent deamination of GMP to IMP. It functions in the conversion of nucleobase, nucleoside and nucleotide derivatives of G to A nucleotides, and in maintaining the intracellular balance of A and G nucleotides. This chain is GMP reductase, found in Shouchella clausii (strain KSM-K16) (Alkalihalobacillus clausii).